Reading from the N-terminus, the 432-residue chain is UDP-N-acetylmuramoylalanine--D-glutamate ligase (432 aa).

Residue 98–104 (GTNGKST) coordinates ATP.

It belongs to the MurCDEF family.

Its subcellular location is the cytoplasm. The enzyme catalyses UDP-N-acetyl-alpha-D-muramoyl-L-alanine + D-glutamate + ATP = UDP-N-acetyl-alpha-D-muramoyl-L-alanyl-D-glutamate + ADP + phosphate + H(+). It functions in the pathway cell wall biogenesis; peptidoglycan biosynthesis. Functionally, cell wall formation. Catalyzes the addition of glutamate to the nucleotide precursor UDP-N-acetylmuramoyl-L-alanine (UMA). The chain is UDP-N-acetylmuramoylalanine--D-glutamate ligase from Fusobacterium nucleatum subsp. nucleatum (strain ATCC 25586 / DSM 15643 / BCRC 10681 / CIP 101130 / JCM 8532 / KCTC 2640 / LMG 13131 / VPI 4355).